Here is a 525-residue protein sequence, read N- to C-terminus: MEETIGRGTWIDKLAHELIEREKALGRSTDMINVESGLGASGIPHMGSLGDAVRAYGVGLALGDMGHAFKLIAYSDDLDGLRKVPEGMPSSLEEHIARPVSAIPDPYGCHDSYGMHMSGLLLEGLDALNIEYDFRRARDTYRDGLLSEQIHGILSSSSKIGEKIAEMVGQEKFRSSLPYFAVCGQCGKMYTAEAVEYVADSRKVRYRCADAKVGGKQVAGCGHEGEADIGGAGGKLAWKVEFAARWQAFDVRFEAYGKDIMDSVRINDWVSDEILSNPHPHHARYEMFLDKGGKKISKSSGNVVTPQKWLRYGTPQSILLLMYKRITGARELGLEDVPALMDEYGDLQREYFAGGGRGGKAREAKNRGLFEYANLLVKQAGPRPHAAYRLLVELSRLFKEDRAERVTKKLVEYGVVDGPSPEIERLIGLAGNYADDMYAAERSDIELDEATKGALSELVELLGSAPGDGLQDAIYGIAKSHGVPPRDFFRALYRIILDTPSGPRIGPFIEDIGREKVAGMIRGRL.

The short motif at Ala40–Ser48 is the 'HIGH' region element. The 'KMSKS' region motif lies at Lys295 to Ser299. ATP is bound at residue Lys298.

The protein belongs to the class-I aminoacyl-tRNA synthetase family.

Its subcellular location is the cytoplasm. The enzyme catalyses tRNA(Lys) + L-lysine + ATP = L-lysyl-tRNA(Lys) + AMP + diphosphate. The sequence is that of Lysine--tRNA ligase (lysS) from Cenarchaeum symbiosum (strain A).